We begin with the raw amino-acid sequence, 65 residues long: U11-theraphotoxin-Cg1a (65 aa).

Residues 1–21 form the signal peptide; that stretch reads MKTTILLVILGLTLLFALSAA. Residues 22 to 29 constitute a propeptide that is removed on maturation; the sequence is TELKDEER. 3 disulfides stabilise this stretch: C31-C45, C38-C50, and C44-C57.

Belongs to the neurotoxin 10 (Hwtx-1) family. 32 (Jztx-16) subfamily. In terms of tissue distribution, expressed by the venom gland.

It is found in the secreted. Functionally, probable ion channel inhibitor. This Chilobrachys guangxiensis (Chinese earth tiger tarantula) protein is U11-theraphotoxin-Cg1a.